The chain runs to 458 residues: MKIFNSLTKQKEIFKPIESGKVKLYVCGMTVYDYMHIGHGRSWIIFDMVVRYLRMRGYEVTFVRNITDIDDKIIKRAGENKESPAALAERFIQILHEDEKALRVLSPDQEPRATQYVPEIIKLIQKLLDNQYAYTGQNGDVFFDVRRFKDYGKLSHRHLDELQAGARVEVSDSKRDPLDFVLWKKAKPGEPKWDSPWGEGRPGWHIECSAMSSSILGQPFDIHGGGLDLKFPHHENEIAQSEAGEEKPFVKLWMHAGLLEINKEKMSKSLGNIISIREALKESDVEVLRYFLLSGHYRNPLSYSKENLENGRLALERFYLALRGLPVVNHEKTSSYTDRFYEAMDDDFNTPIAFALLFEMVREINRFRDNNQIEKAAVLAAELKCLGNIFGLLQYSPEQFLQGAKKEADVQEIKKLIDQRNEARAKKDWKTADQIRDQLTDLGVAIEDSSDGTSWRQE.

Cysteine 27 is a Zn(2+) binding site. The 'HIGH' region signature appears at 29–39 (MTVYDYMHIGH). Residues cysteine 208, histidine 233, and glutamate 237 each contribute to the Zn(2+) site. Residues 265–269 (KMSKS) carry the 'KMSKS' region motif. Lysine 268 serves as a coordination point for ATP.

Belongs to the class-I aminoacyl-tRNA synthetase family. Monomer. Zn(2+) is required as a cofactor.

The protein resides in the cytoplasm. The catalysed reaction is tRNA(Cys) + L-cysteine + ATP = L-cysteinyl-tRNA(Cys) + AMP + diphosphate. In Coxiella burnetii (strain Dugway 5J108-111), this protein is Cysteine--tRNA ligase.